A 393-amino-acid chain; its full sequence is Branched-chain-amino-acid aminotransferase, mitochondrial (393 aa).

A mitochondrion-targeting transit peptide spans 1-16 (MLQRHSLKLGKFSIRT). Lys219 carries the N6-(pyridoxal phosphate)lysine modification. Thr315 carries the phosphothreonine modification.

This sequence belongs to the class-IV pyridoxal-phosphate-dependent aminotransferase family. It depends on pyridoxal 5'-phosphate as a cofactor.

The protein resides in the mitochondrion matrix. It carries out the reaction L-leucine + 2-oxoglutarate = 4-methyl-2-oxopentanoate + L-glutamate. The catalysed reaction is L-isoleucine + 2-oxoglutarate = (S)-3-methyl-2-oxopentanoate + L-glutamate. The enzyme catalyses L-valine + 2-oxoglutarate = 3-methyl-2-oxobutanoate + L-glutamate. It catalyses the reaction a 2-oxocarboxylate + L-methionine = 4-methylsulfanyl-2-oxobutanoate + an L-alpha-amino acid. The protein operates within amino-acid biosynthesis; L-isoleucine biosynthesis; L-isoleucine from 2-oxobutanoate: step 4/4. It functions in the pathway amino-acid biosynthesis; L-leucine biosynthesis; L-leucine from 3-methyl-2-oxobutanoate: step 4/4. Its pathway is amino-acid biosynthesis; L-valine biosynthesis; L-valine from pyruvate: step 4/4. It participates in amino-acid biosynthesis; L-methionine biosynthesis via salvage pathway; L-methionine from S-methyl-5-thio-alpha-D-ribose 1-phosphate: step 6/6. Its function is as follows. Mitochondrial isozyme of branched-chain-amino-acid aminotransferase, involved in the biosynthesis of the branched chain amino acids (BCAAs) leucine, isoleucine, and valine. Catalyzes the formation of methionine from 2-keto-4-methylthiobutyrate (KMTB) in the methionine salvage pathway primarily using BCAAs (leucine, isoleucine, and valine) as the amino donors. Appears to be involved in the regulation of the cell cycle, although this may be indirect via metabolic changes. Connects BCAAs and TCA-cycle metabolism governing TCA-cycle flux to activate TORC1 signaling. High copy suppressor of a temperature-sensitive mutation in the ABC transporter, ATM1. The sequence is that of Branched-chain-amino-acid aminotransferase, mitochondrial from Saccharomyces cerevisiae (strain ATCC 204508 / S288c) (Baker's yeast).